A 272-amino-acid polypeptide reads, in one-letter code: Tryptophan synthase alpha chain (272 aa).

Active-site proton acceptor residues include Glu53 and Asp64.

It belongs to the TrpA family. As to quaternary structure, tetramer of two alpha and two beta chains.

It catalyses the reaction (1S,2R)-1-C-(indol-3-yl)glycerol 3-phosphate + L-serine = D-glyceraldehyde 3-phosphate + L-tryptophan + H2O. It functions in the pathway amino-acid biosynthesis; L-tryptophan biosynthesis; L-tryptophan from chorismate: step 5/5. Functionally, the alpha subunit is responsible for the aldol cleavage of indoleglycerol phosphate to indole and glyceraldehyde 3-phosphate. This Xanthomonas campestris pv. campestris (strain 8004) protein is Tryptophan synthase alpha chain.